We begin with the raw amino-acid sequence, 217 residues long: Ribulose-phosphate 3-epimerase (217 aa).

Position 6 (S6) interacts with substrate. A divalent metal cation-binding residues include H29, D31, and H62. The active-site Proton acceptor is D31. Residues H62, 138–141 (GFGG), 171–173 (DGG), and 193–194 (GS) contribute to the substrate site. Residue D171 coordinates a divalent metal cation. The active-site Proton donor is D171.

It belongs to the ribulose-phosphate 3-epimerase family. Requires a divalent metal cation as cofactor.

The enzyme catalyses D-ribulose 5-phosphate = D-xylulose 5-phosphate. It participates in carbohydrate degradation. Functionally, catalyzes the reversible epimerization of D-ribulose 5-phosphate to D-xylulose 5-phosphate. The chain is Ribulose-phosphate 3-epimerase from Helicobacter pylori (strain J99 / ATCC 700824) (Campylobacter pylori J99).